Consider the following 154-residue polypeptide: Large ribosomal subunit protein uL13 (154 aa).

It belongs to the universal ribosomal protein uL13 family. In terms of assembly, part of the 50S ribosomal subunit.

Its function is as follows. This protein is one of the early assembly proteins of the 50S ribosomal subunit, although it is not seen to bind rRNA by itself. It is important during the early stages of 50S assembly. The chain is Large ribosomal subunit protein uL13 from Rhodopseudomonas palustris (strain ATCC BAA-98 / CGA009).